Consider the following 605-residue polypeptide: Glutamine--fructose-6-phosphate aminotransferase [isomerizing] (605 aa).

C2 functions as the Nucleophile; for GATase activity in the catalytic mechanism. In terms of domain architecture, Glutamine amidotransferase type-2 spans 2–220 (CGIVGVTGKD…DGEIVVVKPD (219 aa)). 2 SIS domains span residues 286–426 (LLTA…VDQP) and 458–595 (AKSA…VDKP). The active-site For Fru-6P isomerization activity is the K600.

As to quaternary structure, homodimer.

The protein localises to the cytoplasm. The catalysed reaction is D-fructose 6-phosphate + L-glutamine = D-glucosamine 6-phosphate + L-glutamate. Its function is as follows. Catalyzes the first step in hexosamine metabolism, converting fructose-6P into glucosamine-6P using glutamine as a nitrogen source. The protein is Glutamine--fructose-6-phosphate aminotransferase [isomerizing] of Lactiplantibacillus plantarum (strain ATCC BAA-793 / NCIMB 8826 / WCFS1) (Lactobacillus plantarum).